The following is a 190-amino-acid chain: Signal peptidase I W (190 aa).

The helical transmembrane segment at 4-24 (ISNILYVIIFTLIIVLTLVVI) threads the bilayer. Ser45 is an active-site residue. Residues 143-163 (PIGTAVLLIVPGVMLLVYAFV) form a helical membrane-spanning segment.

The protein belongs to the peptidase S26B family.

Its subcellular location is the cell membrane. The enzyme catalyses Cleavage of hydrophobic, N-terminal signal or leader sequences from secreted and periplasmic proteins.. Its function is as follows. Required for the cleavage of the signal sequence of TasA and TapA, which are involved in biofilm formation. The protein is Signal peptidase I W of Bacillus subtilis (strain 168).